The chain runs to 93 residues: DNA-directed RNA polymerase subunit Rpo11 (93 aa).

It belongs to the archaeal Rpo11/eukaryotic RPB11/RPC19 RNA polymerase subunit family. In terms of assembly, part of the RNA polymerase complex.

The protein localises to the cytoplasm. The catalysed reaction is RNA(n) + a ribonucleoside 5'-triphosphate = RNA(n+1) + diphosphate. DNA-dependent RNA polymerase (RNAP) catalyzes the transcription of DNA into RNA using the four ribonucleoside triphosphates as substrates. The sequence is that of DNA-directed RNA polymerase subunit Rpo11 from Sulfurisphaera tokodaii (strain DSM 16993 / JCM 10545 / NBRC 100140 / 7) (Sulfolobus tokodaii).